The following is a 406-amino-acid chain: MSAPKKVVLAYSGGLDTSIILKWLQTEYGCEVVTFTADLGQGEELEPARAKAEMMGASDIYIEDVREEFVRDFVFPMFRANAVYEGLYLLGTSIARPLISKRLVEIAEETGADAIAHGATGKGNDQVRFELAAYALNPDIKVIAPWREWDLSSRTKLIDFAEKNQIPIAKDKRGEAPFSVDANLLHTSSEGKVLENPAVDAPDYVYQRTVNPEDAPDTPEYIEIGFEKGDAVSINGEAMSPATILTKLNEIGGKHGCGRLDLVEGRFVGMKSRGIYETPGGTLLLEAHRGIESITLDRGAMHLKDELMPRYAELIYNGFWFSPERTMLQAAIDASQTHVTGTVRLKLYKGLARTVGRWSDHSLYSEAHVTFEEDAGAYDQTDAAGFIQLNALRLKLLAARDRRLKS.

Residues Ala-10–Ser-18 and Ala-37 contribute to the ATP site. L-citrulline contacts are provided by Tyr-88 and Ser-93. Residue Gly-118 coordinates ATP. Positions 120, 124, and 125 each coordinate L-aspartate. Asn-124 is a binding site for L-citrulline. 5 residues coordinate L-citrulline: Arg-128, Ser-179, Ser-188, Glu-264, and Tyr-276.

The protein belongs to the argininosuccinate synthase family. Type 1 subfamily. As to quaternary structure, homotetramer.

It is found in the cytoplasm. It carries out the reaction L-citrulline + L-aspartate + ATP = 2-(N(omega)-L-arginino)succinate + AMP + diphosphate + H(+). The protein operates within amino-acid biosynthesis; L-arginine biosynthesis; L-arginine from L-ornithine and carbamoyl phosphate: step 2/3. The chain is Argininosuccinate synthase from Roseobacter denitrificans (strain ATCC 33942 / OCh 114) (Erythrobacter sp. (strain OCh 114)).